The sequence spans 174 residues: Adenine phosphoribosyltransferase (174 aa).

Belongs to the purine/pyrimidine phosphoribosyltransferase family. As to quaternary structure, homodimer.

The protein resides in the cytoplasm. The enzyme catalyses AMP + diphosphate = 5-phospho-alpha-D-ribose 1-diphosphate + adenine. It functions in the pathway purine metabolism; AMP biosynthesis via salvage pathway; AMP from adenine: step 1/1. Catalyzes a salvage reaction resulting in the formation of AMP, that is energically less costly than de novo synthesis. This chain is Adenine phosphoribosyltransferase, found in Lachnoclostridium phytofermentans (strain ATCC 700394 / DSM 18823 / ISDg) (Clostridium phytofermentans).